The sequence spans 173 residues: Shikimate kinase 1 (173 aa).

14 to 19 (GAGKST) contributes to the ATP binding site. A Mg(2+)-binding site is contributed by Ser18. Substrate is bound by residues Asp36, Arg60, and Gly82. Arg120 provides a ligand contact to ATP. Arg140 contributes to the substrate binding site. Gln157 is a binding site for ATP.

The protein belongs to the shikimate kinase family. In terms of assembly, monomer. The cofactor is Mg(2+).

Its subcellular location is the cytoplasm. It carries out the reaction shikimate + ATP = 3-phosphoshikimate + ADP + H(+). The protein operates within metabolic intermediate biosynthesis; chorismate biosynthesis; chorismate from D-erythrose 4-phosphate and phosphoenolpyruvate: step 5/7. Catalyzes the specific phosphorylation of the 3-hydroxyl group of shikimic acid using ATP as a cosubstrate. The protein is Shikimate kinase 1 of Citrobacter koseri (strain ATCC BAA-895 / CDC 4225-83 / SGSC4696).